Consider the following 1025-residue polypeptide: Probable outer membrane protein PmpF (1025 aa).

A signal peptide spans 1 to 20 (MTRRILPLSLVFIPLSCISA). Residues 654–681 (NSTETQTANNSIQEQKNTSETFDSNSTT) are disordered. Residues 659 to 681 (QTANNSIQEQKNTSETFDSNSTT) are compositionally biased toward polar residues. The 278-residue stretch at 748–1025 (LLPDDSWFAL…YMNAGGALVF (278 aa)) folds into the Autotransporter domain.

It belongs to the PMP outer membrane protein family.

It localises to the secreted. The protein localises to the cell wall. It is found in the cell outer membrane. The polypeptide is Probable outer membrane protein PmpF (pmpF) (Chlamydia muridarum (strain MoPn / Nigg)).